The sequence spans 218 residues: N-(5'-phosphoribosyl)anthranilate isomerase (218 aa).

Belongs to the TrpF family.

It catalyses the reaction N-(5-phospho-beta-D-ribosyl)anthranilate = 1-(2-carboxyphenylamino)-1-deoxy-D-ribulose 5-phosphate. It participates in amino-acid biosynthesis; L-tryptophan biosynthesis; L-tryptophan from chorismate: step 3/5. This Chelativorans sp. (strain BNC1) protein is N-(5'-phosphoribosyl)anthranilate isomerase.